We begin with the raw amino-acid sequence, 657 residues long: L-glutamate oxidase precursor (657 aa).

Residues 1 to 12 (MTETPRDNSATR) form the signal peptide. 9 residues coordinate FAD: glutamate 86, alanine 87, arginine 95, methionine 120, arginine 121, methionine 350, glutamate 639, tryptophan 647, and isoleucine 648.

The protein belongs to the flavin monoamine oxidase family. LGOX subfamily. The mature enzyme is a heterohexamer composed of 2 alpha chains, 2 beta chains and 2 gamma chains (alpha2beta2gamma2). Requires FAD as cofactor. Post-translationally, the precursor form is proteolytically cleaved by an endopeptidase into alpha, beta and gamma chains, which form the stable mature enzyme.

It is found in the secreted. It carries out the reaction L-glutamate + O2 + H2O = H2O2 + 2-oxoglutarate + NH4(+). Proteinase K-treated enzyme exhibits improved affinity for the substrate, increased activity and increased thermostability. Its function is as follows. Catalyzes the oxidative deamination of L-glutamate to 2-ketoglutarate along with the production of ammonia and hydrogen peroxide. Exhibits strict specificity for L-glutamate, and shows only very weak activity with L-glutamine. This is L-glutamate oxidase precursor from Streptomyces diastatochromogenes.